Reading from the N-terminus, the 1031-residue chain is MLKIFTKLFGSKHDKDIKKIQPTIERINEIFSSLSSLSDDELRLKTASLKDRIQSALAETEQKRNDLEQKLDNPELDLNQADNINQELDTLDTQFEEKTAAILEEILPETFAIVKETCRRLKGLEYNVVGHSMTWDMVPYDVQLIGGVVLHSGKISEMATGEGKTLVSTLPAFLNALTGRGVHIVTVNDYLAQRDREWMKPVFDFHGLKTGVILTSMKPQERREQYLCDITYGTNNEFGFDYLRDNMAGAPADLVQRPFYYAIVDEVDSVLIDEARTPLIISGPVPHSNTDKFIEIQPWIERLVKSQQNLVAGYLTDAEKALKNKADDFDAGLALLRVKRGQPKNKRFIKVLSQTGIARLIQNVENEYLKDNASRMQEVDDELFYSVDEKTGTIDLTDKGRDFLSQLSKQDSDIFLVPDVGAEIAIIEAEKTLSAEEKIKRKDDIYRLFSERSERLHNISQLLKAYSLFDRDSEYVVQNGQVMIVDEFTGRILPGRRYSDGLHQAIEAKENVKIEGETQTLATITIQNYFRLYKKLGGMTGTAETESSEFFEIYSLDVVVIPTNKPIQRHDLNDFVFKTRREKYTAIIGKIIELQEKGQPVLVGTASVEVSETLSRMLRAKKIRHSVLNAKQHEQEAEIVAHAGEKGAVTIATNMAGRGTDIKLGQGVRESGGLFILGSERHESRRIDRQLRGRAGRQGDPGESIFYVSLEDNLMRLFGSERVISVMDRLGHEEGDIIEHPMVTKSIERAQKKVEEQNFAIRKRLLEYDDVLNQQREVIYKRRRNALIKERLTADIFDLLHDHATKVIEKYHPNADVDGLEEQVLRELSVEFKIESDEFEKNSVEENADKLFQTAIAFYKRKEEMVPSNIMRQIERYAVLSVIDQKWREHLREIDSVKEGINLRAYGQKDPLLEYKQEAYRLFVELLREIELETLSLAFKLFPVTPEAQEQIEERQKMSQVRKERLVAKHEESQGALNAAAAQRAERPSSSDPAAEKAGTTAQPVKAEQTPGRNDPCPCGSGKKYKNCCGR.

ATP contacts are provided by residues Gln-143, 161–165, and Asp-661; that span reads GEGKT. The span at 963–973 shows a compositional bias: basic and acidic residues; that stretch reads KERLVAKHEES. The interval 963 to 1031 is disordered; that stretch reads KERLVAKHEE…GKKYKNCCGR (69 aa). Zn(2+)-binding residues include Cys-1017, Cys-1019, Cys-1028, and Cys-1029.

Belongs to the SecA family. As to quaternary structure, monomer and homodimer. Part of the essential Sec protein translocation apparatus which comprises SecA, SecYEG and auxiliary proteins SecDF. Other proteins may also be involved. Zn(2+) is required as a cofactor.

Its subcellular location is the cell inner membrane. The protein resides in the cytoplasm. The enzyme catalyses ATP + H2O + cellular proteinSide 1 = ADP + phosphate + cellular proteinSide 2.. Part of the Sec protein translocase complex. Interacts with the SecYEG preprotein conducting channel. Has a central role in coupling the hydrolysis of ATP to the transfer of proteins into and across the cell membrane, serving as an ATP-driven molecular motor driving the stepwise translocation of polypeptide chains across the membrane. The chain is Protein translocase subunit SecA from Prosthecochloris aestuarii (strain DSM 271 / SK 413).